We begin with the raw amino-acid sequence, 325 residues long: Probable serine/threonine-protein phosphatase 2A activator 1 (325 aa).

Belongs to the PTPA-type PPIase family.

The protein resides in the cytoplasm. It catalyses the reaction [protein]-peptidylproline (omega=180) = [protein]-peptidylproline (omega=0). Its function is as follows. PPIases accelerate the folding of proteins. It catalyzes the cis-trans isomerization of proline imidic peptide bonds in oligopeptides. Acts as a regulatory subunit for PP2A-like phosphatases modulating their activity or substrate specificity, probably by inducing a conformational change in the catalytic subunit, a direct target of the PPIase. This Dictyostelium discoideum (Social amoeba) protein is Probable serine/threonine-protein phosphatase 2A activator 1 (ppp2r4A).